The sequence spans 200 residues: Mediator of RNA polymerase II transcription subunit 22 (200 aa).

Positions 93–123 (SVNDAISLQNQQLRSLQEECDKKLISLRDEI) form a coiled coil. Residues 159–200 (ASPSSSSSSTQGDQEEVEILPSQETEPQHHLNGQGTSSLEKM) are disordered. Positions 189–200 (LNGQGTSSLEKM) are enriched in polar residues.

This sequence belongs to the Mediator complex subunit 22 family. As to quaternary structure, component of the Mediator complex.

The protein localises to the nucleus. Component of the Mediator complex, a coactivator involved in the regulated transcription of nearly all RNA polymerase II-dependent genes. Mediator functions as a bridge to convey information from gene-specific regulatory proteins to the basal RNA polymerase II transcription machinery. Mediator is recruited to promoters by direct interactions with regulatory proteins and serves as a scaffold for the assembly of a functional preinitiation complex with RNA polymerase II and the general transcription factors. This chain is Mediator of RNA polymerase II transcription subunit 22 (med22), found in Takifugu rubripes (Japanese pufferfish).